We begin with the raw amino-acid sequence, 217 residues long: tRNA 5-hydroxyuridine methyltransferase (217 aa).

S-adenosyl-L-methionine-binding positions include Met-38, Ser-68, Glu-85, 113 to 114, and Asp-133; that span reads DA. Residues Asp-133, Asp-159, and Asn-160 each coordinate Mg(2+).

Belongs to the class I-like SAM-binding methyltransferase superfamily. Cation-dependent O-methyltransferase family. As to quaternary structure, homodimer.

The catalysed reaction is 5-hydroxyuridine(34) in tRNA + S-adenosyl-L-methionine = 5-methoxyuridine(34) in tRNA + S-adenosyl-L-homocysteine + H(+). Catalyzes the methylation of 5-hydroxyuridine (ho5U) to form 5-methoxyuridine (mo5U) at position 34 in tRNAs. This is tRNA 5-hydroxyuridine methyltransferase from Bacillus subtilis (strain 168).